The following is a 232-amino-acid chain: Large ribosomal subunit protein uL1 (232 aa).

This sequence belongs to the universal ribosomal protein uL1 family. Part of the 50S ribosomal subunit.

In terms of biological role, binds directly to 23S rRNA. The L1 stalk is quite mobile in the ribosome, and is involved in E site tRNA release. Functionally, protein L1 is also a translational repressor protein, it controls the translation of the L11 operon by binding to its mRNA. The polypeptide is Large ribosomal subunit protein uL1 (Xanthomonas oryzae pv. oryzae (strain KACC10331 / KXO85)).